A 545-amino-acid chain; its full sequence is Mitogen-activated protein kinase kinase kinase mom-4 (545 aa).

The segment covering 1–21 has biased composition (low complexity); sequence MDTSPHSKPSSSSASQSSHSP. The tract at residues 1 to 35 is disordered; that stretch reads MDTSPHSKPSSSSASQSSHSPSPAPVTAPRKTRDS. The region spanning 53 to 308 is the Protein kinase domain; that stretch reads NLNSHQLGRG…AECLQYFTAL (256 aa). Residues 59-67 and lysine 86 each bind ATP; that span reads LGRGTYGIV. Aspartate 178 (proton acceptor) is an active-site residue. The interval 316-444 is disordered; that stretch reads NVPLADANTN…PIDDRRDSNE (129 aa). Polar residues-rich tracts occupy residues 352-369 and 396-411; these read NGRTPTASNHLNAPQAVN and ASSSGAFRGPRSQSEA.

The protein belongs to the protein kinase superfamily. STE Ser/Thr protein kinase family. MAP kinase kinase kinase subfamily. In terms of assembly, interacts with, and is activated by, tap-1. Requires Mg(2+) as cofactor.

It carries out the reaction L-seryl-[protein] + ATP = O-phospho-L-seryl-[protein] + ADP + H(+). It catalyses the reaction L-threonyl-[protein] + ATP = O-phospho-L-threonyl-[protein] + ADP + H(+). Its function is as follows. Part of the Wnt signaling pathway essential for the specification of the mesodermal cell fate in early embryos. Stimulates the wrm-1/lit-1-dependent phosphorylation of pop-1 and plays a role in the initial nuclear accumulation of wrm-1. In Caenorhabditis briggsae, this protein is Mitogen-activated protein kinase kinase kinase mom-4.